The chain runs to 122 residues: Large ribosomal subunit protein uL14 (122 aa).

It belongs to the universal ribosomal protein uL14 family. In terms of assembly, part of the 50S ribosomal subunit. Forms a cluster with proteins L3 and L19. In the 70S ribosome, L14 and L19 interact and together make contacts with the 16S rRNA in bridges B5 and B8.

Binds to 23S rRNA. Forms part of two intersubunit bridges in the 70S ribosome. The polypeptide is Large ribosomal subunit protein uL14 (Shewanella halifaxensis (strain HAW-EB4)).